The primary structure comprises 291 residues: Proteasome subunit beta (291 aa).

A propeptide spans Met-1–Gly-56 (removed in mature form; by autocatalysis). The Nucleophile role is filled by Thr-57.

This sequence belongs to the peptidase T1B family. As to quaternary structure, the 20S proteasome core is composed of 14 alpha and 14 beta subunits that assemble into four stacked heptameric rings, resulting in a barrel-shaped structure. The two inner rings, each composed of seven catalytic beta subunits, are sandwiched by two outer rings, each composed of seven alpha subunits. The catalytic chamber with the active sites is on the inside of the barrel. Has a gated structure, the ends of the cylinder being occluded by the N-termini of the alpha-subunits. Is capped by the proteasome-associated ATPase, ARC.

It localises to the cytoplasm. It catalyses the reaction Cleavage of peptide bonds with very broad specificity.. The protein operates within protein degradation; proteasomal Pup-dependent pathway. The formation of the proteasomal ATPase ARC-20S proteasome complex, likely via the docking of the C-termini of ARC into the intersubunit pockets in the alpha-rings, may trigger opening of the gate for substrate entry. Interconversion between the open-gate and close-gate conformations leads to a dynamic regulation of the 20S proteasome proteolysis activity. Functionally, component of the proteasome core, a large protease complex with broad specificity involved in protein degradation. The polypeptide is Proteasome subunit beta (Mycobacterium leprae (strain Br4923)).